The sequence spans 331 residues: Malate dehydrogenase (331 aa).

14–20 (GAAGSIG) is a binding site for NAD(+). Residues Arg95 and Arg101 each coordinate substrate. NAD(+) is bound by residues Asn108, Gln115, and 132–134 (VGN). Residues Asn134 and Arg165 each contribute to the substrate site. His190 serves as the catalytic Proton acceptor.

Belongs to the LDH/MDH superfamily. MDH type 2 family.

The enzyme catalyses (S)-malate + NAD(+) = oxaloacetate + NADH + H(+). Catalyzes the reversible oxidation of malate to oxaloacetate. In Rhodococcus opacus (strain B4), this protein is Malate dehydrogenase.